The sequence spans 66 residues: UPF0337 protein spyM18_1212 (66 aa).

This sequence belongs to the UPF0337 (CsbD) family.

In Streptococcus pyogenes serotype M18 (strain MGAS8232), this protein is UPF0337 protein spyM18_1212.